The sequence spans 567 residues: Mitochondrial distribution and morphology protein 34 (567 aa).

The SMP-LTD domain maps to 1–224 (MSFKFNEESF…LPSALFNMSR (224 aa)). Residues 392-416 (NKATETSSNLNADSEITPVSSSHNA) are compositionally biased toward polar residues. A disordered region spans residues 392–453 (NKATETSSNL…NRSSSFTSSI (62 aa)). Positions 417–452 (TSSVNTITSLTTSSLGSTAGSSNSKNTNRSSSFTSS) are enriched in low complexity.

This sequence belongs to the MDM34 family. Component of the ER-mitochondria encounter structure (ERMES) or MDM complex, composed of MMM1, MDM10, MDM12 and MDM34.

Its subcellular location is the mitochondrion outer membrane. In terms of biological role, component of the ERMES/MDM complex, which serves as a molecular tether to connect the endoplasmic reticulum (ER) and mitochondria. Components of this complex are involved in the control of mitochondrial shape and protein biogenesis, and function in nonvesicular lipid trafficking between the ER and mitochondria. MDM34 is required for the interaction of the ER-resident membrane protein MMM1 and the outer mitochondrial membrane-resident beta-barrel protein MDM10. This Vanderwaltozyma polyspora (strain ATCC 22028 / DSM 70294 / BCRC 21397 / CBS 2163 / NBRC 10782 / NRRL Y-8283 / UCD 57-17) (Kluyveromyces polysporus) protein is Mitochondrial distribution and morphology protein 34.